The chain runs to 253 residues: Tyrosine recombinase XerD-like (253 aa).

Residues 8 to 81 (KQLTTQITNF…AVNQFLLYLY (74 aa)) form the Core-binding (CB) domain. The region spanning 93-253 (SETAPLPSQQ…PVTLEKYYKT (161 aa)) is the Tyr recombinase domain. Catalysis depends on residues Lys157 and Arg218. Tyr250 functions as the O-(3'-phospho-DNA)-tyrosine intermediate in the catalytic mechanism.

This sequence belongs to the 'phage' integrase family. XerD-like subfamily.

The protein resides in the cytoplasm. Putative tyrosine recombinase. Not involved in the cutting and rejoining of the recombining DNA molecules on dif(SL) site. This is Tyrosine recombinase XerD-like from Streptococcus thermophilus (strain CNRZ 1066).